Consider the following 494-residue polypeptide: Xylan glycosyltransferase MUCI21 (494 aa).

Residues 1–40 are Cytoplasmic-facing; that stretch reads MRQNLKKVAQIKVDESKKLFPYVFRVKTSCGNCAKRSKPK. The chain crosses the membrane as a helical; Signal-anchor for type II membrane protein span at residues 41 to 61; sequence LIYLLIFSLISSCFVFAPQLL. The Lumenal segment spans residues 62–494; the sequence is CFPYPSALFL…LIDAYAKSIR (433 aa). An N-linked (GlcNAc...) asparagine glycan is attached at N375.

This sequence belongs to the glycosyltransferase 61 family.

The protein localises to the golgi apparatus membrane. Glycosyletransferase required for the proper composition and structural properties of released seed coat mucilage. Required for the production of highly branched xylan polymers in seed coat mucilage. Facilitates the addition of xylose residues directly to the xylan backbone. Xylan with xylose side chains seems to be necessary for pectin attachment to the seed surface. Essential for xylan synthesis in seed coat epidermal (SCE) cells. In Arabidopsis thaliana (Mouse-ear cress), this protein is Xylan glycosyltransferase MUCI21.